The primary structure comprises 185 residues: ATP synthase subunit b 2 (185 aa).

A disordered region spans residues 1-23 (MAEGHGDAKGATAHTAADGGHKA). Over residues 9–18 (KGATAHTAAD) the composition is skewed to low complexity. Residues 37–57 (LVSLTIAFVALYLIVSKIILP) traverse the membrane as a helical segment.

The protein belongs to the ATPase B chain family. F-type ATPases have 2 components, F(1) - the catalytic core - and F(0) - the membrane proton channel. F(1) has five subunits: alpha(3), beta(3), gamma(1), delta(1), epsilon(1). F(0) has three main subunits: a(1), b(2) and c(10-14). The alpha and beta chains form an alternating ring which encloses part of the gamma chain. F(1) is attached to F(0) by a central stalk formed by the gamma and epsilon chains, while a peripheral stalk is formed by the delta and b chains.

The protein resides in the cell inner membrane. Its function is as follows. F(1)F(0) ATP synthase produces ATP from ADP in the presence of a proton or sodium gradient. F-type ATPases consist of two structural domains, F(1) containing the extramembraneous catalytic core and F(0) containing the membrane proton channel, linked together by a central stalk and a peripheral stalk. During catalysis, ATP synthesis in the catalytic domain of F(1) is coupled via a rotary mechanism of the central stalk subunits to proton translocation. Component of the F(0) channel, it forms part of the peripheral stalk, linking F(1) to F(0). The b'-subunit is a diverged and duplicated form of b found in plants and photosynthetic bacteria. This Rhodopseudomonas palustris (strain BisB5) protein is ATP synthase subunit b 2 (atpF2).